A 501-amino-acid chain; its full sequence is Glycerol kinase (501 aa).

Thr11 is an ADP binding site. ATP-binding residues include Thr11, Thr12, and Ser13. Thr11 serves as a coordination point for sn-glycerol 3-phosphate. Arg15 contributes to the ADP binding site. 4 residues coordinate sn-glycerol 3-phosphate: Arg81, Glu82, Tyr133, and Asp242. Positions 81, 82, 133, 242, and 243 each coordinate glycerol. ADP contacts are provided by Thr264 and Gly307. Positions 264, 307, 311, and 409 each coordinate ATP. ADP-binding residues include Gly409 and Asn413.

This sequence belongs to the FGGY kinase family.

It carries out the reaction glycerol + ATP = sn-glycerol 3-phosphate + ADP + H(+). It functions in the pathway polyol metabolism; glycerol degradation via glycerol kinase pathway; sn-glycerol 3-phosphate from glycerol: step 1/1. With respect to regulation, inhibited by fructose 1,6-bisphosphate (FBP). Functionally, key enzyme in the regulation of glycerol uptake and metabolism. Catalyzes the phosphorylation of glycerol to yield sn-glycerol 3-phosphate. This Borreliella afzelii (strain PKo) (Borrelia afzelii) protein is Glycerol kinase.